Reading from the N-terminus, the 66-residue chain is UPF0150 protein AF_0072.1 (66 aa).

The protein belongs to the UPF0150 family.

The chain is UPF0150 protein AF_0072.1 from Archaeoglobus fulgidus (strain ATCC 49558 / DSM 4304 / JCM 9628 / NBRC 100126 / VC-16).